Consider the following 112-residue polypeptide: Macrodomain Ori protein (112 aa).

The tract at residues 91 to 112 (FHTLSGGKPQVEGAEDYTDSDD) is disordered. Over residues 103–112 (GAEDYTDSDD) the composition is skewed to acidic residues.

The protein belongs to the MaoP family.

Its function is as follows. Involved in the organization of the Ori region of the chromosome into a macrodomain (MD). It constrains DNA mobility in the Ori macrodomain and limits long-distance DNA interactions with other chromosomal regions. The chain is Macrodomain Ori protein from Escherichia coli O157:H7.